We begin with the raw amino-acid sequence, 229 residues long: Glutathione S-transferase 1 (229 aa).

Residues serine 2–alanine 83 enclose the GST N-terminal domain. Residues histidine 41–lysine 42, lysine 54–methionine 55, and glutamate 67–serine 68 each bind glutathione. In terms of domain architecture, GST C-terminal spans glycine 93–phenylalanine 223.

This sequence belongs to the GST superfamily. Phi family.

It carries out the reaction RX + glutathione = an S-substituted glutathione + a halide anion + H(+). Conjugation of reduced glutathione to a wide number of exogenous and endogenous hydrophobic electrophiles. The chain is Glutathione S-transferase 1 (GSTA1) from Triticum aestivum (Wheat).